The following is a 358-amino-acid chain: MINLLNITYPEFESLIVTTLQEKTYRAMQIWQWVWQKQITDIESMTNLPQKIRASLTALIKINLPEIVTIQQSSDGTKKFLLRLSDGALIETVLIPSIDKAGNIRITQCLSSQVGCSMGCTFCSTATMGFIRNLTAGEIVSQVLLAKLHLNDNKPDKPIIRNIVFMGMGEPLLNLTELTRALHILHSEKGLNFSARRITVSTCGIKKGIQALSENGLAFLALSLHASNQELRSTIMPKAAKWDLKELIDTLKNYSLKKREKITFEYLLLGGINDSPEHAKELAKLITDIKGKLNLIPYNPAQGQPYLKPTEENILKFQKVLWSKGIVTILRKSKGQDINAACGQLKTTYLSQSSSTIY.

The active-site Proton acceptor is Glu-91. Residues Gly-102 to Asp-337 form the Radical SAM core domain. A disulfide bridge links Cys-109 with Cys-342. [4Fe-4S] cluster-binding residues include Cys-116, Cys-120, and Cys-123. S-adenosyl-L-methionine-binding positions include Gly-169–Glu-170, Ser-201, Ser-223–His-225, and Asn-299. Residue Cys-342 is the S-methylcysteine intermediate of the active site.

Belongs to the radical SAM superfamily. RlmN family. Requires [4Fe-4S] cluster as cofactor.

The protein resides in the cytoplasm. The enzyme catalyses adenosine(2503) in 23S rRNA + 2 reduced [2Fe-2S]-[ferredoxin] + 2 S-adenosyl-L-methionine = 2-methyladenosine(2503) in 23S rRNA + 5'-deoxyadenosine + L-methionine + 2 oxidized [2Fe-2S]-[ferredoxin] + S-adenosyl-L-homocysteine. It catalyses the reaction adenosine(37) in tRNA + 2 reduced [2Fe-2S]-[ferredoxin] + 2 S-adenosyl-L-methionine = 2-methyladenosine(37) in tRNA + 5'-deoxyadenosine + L-methionine + 2 oxidized [2Fe-2S]-[ferredoxin] + S-adenosyl-L-homocysteine. In terms of biological role, specifically methylates position 2 of adenine 2503 in 23S rRNA and position 2 of adenine 37 in tRNAs. m2A2503 modification seems to play a crucial role in the proofreading step occurring at the peptidyl transferase center and thus would serve to optimize ribosomal fidelity. The chain is Dual-specificity RNA methyltransferase RlmN from Lawsonia intracellularis (strain PHE/MN1-00).